The sequence spans 225 residues: VAAAIACALFNLKCKIYMGYKDIKRQSPNVFRMKLMGAEVISVENGSGTLKDACNEALRDWSRNYQKSHYMIGTAAGPHPYPTIVKEFQKMIGEEAKKQILEQENRLPDAIIACVGGGSNAIGIFSDFIDEKVNLIGVEPAGKGIETGKHGAPLTHGRTGIYFGMKSHLMQSQEGQIEKSWSVSAGLDFPSVGPEHSWLNSINRAKYVSVTDIEALEAFQILSKK.

This sequence belongs to the TrpB family. Tetramer of two alpha and two beta chains. It depends on pyridoxal 5'-phosphate as a cofactor.

It catalyses the reaction (1S,2R)-1-C-(indol-3-yl)glycerol 3-phosphate + L-serine = D-glyceraldehyde 3-phosphate + L-tryptophan + H2O. Its pathway is amino-acid biosynthesis; L-tryptophan biosynthesis; L-tryptophan from chorismate: step 5/5. Its function is as follows. The beta subunit is responsible for the synthesis of L-tryptophan from indole and L-serine. This is Tryptophan synthase beta chain (trpB) from Buchnera aphidicola subsp. Rhopalosiphum padi.